Reading from the N-terminus, the 200-residue chain is Putative 3-methyladenine DNA glycosylase (200 aa).

It belongs to the DNA glycosylase MPG family.

This is Putative 3-methyladenine DNA glycosylase from Rhodopseudomonas palustris (strain BisB18).